A 161-amino-acid polypeptide reads, in one-letter code: Transcriptional regulator MraZ (161 aa).

SpoVT-AbrB domains are found at residues 7-69 (KELH…EPDV) and 98-141 (LDVV…EPER).

The protein belongs to the MraZ family. In terms of assembly, forms oligomers.

The protein resides in the cytoplasm. It localises to the nucleoid. The sequence is that of Transcriptional regulator MraZ from Chlorobium limicola (strain DSM 245 / NBRC 103803 / 6330).